We begin with the raw amino-acid sequence, 235 residues long: Ion-translocating oxidoreductase complex subunit E (235 aa).

The next 5 membrane-spanning stretches (helical) occupy residues 63–83, 93–113, 117–137, 152–172, and 206–226; these read LGLGLATMLVLTCTNTVISLF, IPIYVMIIATTVTAVQLLMNA, TLYQSLGIFIPLIVTNCIIIG, IWDGFSMGLGMALSLTILGAL, and SFLLFILPPGAFIGLGLLLAI.

The protein belongs to the NqrDE/RnfAE family. In terms of assembly, the complex is composed of six subunits: RnfA, RnfB, RnfC, RnfD, RnfE and RnfG.

Its subcellular location is the cell inner membrane. In terms of biological role, part of a membrane-bound complex that couples electron transfer with translocation of ions across the membrane. In Haemophilus influenzae (strain ATCC 51907 / DSM 11121 / KW20 / Rd), this protein is Ion-translocating oxidoreductase complex subunit E.